The following is a 123-amino-acid chain: Large ribosomal subunit protein uL29 (123 aa).

At Lys-19 the chain carries N6-acetyllysine. Lys-25 is covalently cross-linked (Glycyl lysine isopeptide (Lys-Gly) (interchain with G-Cter in SUMO2)). Position 29 is a phosphoserine (Ser-29). At Lys-43 the chain carries N6-acetyllysine. The tract at residues 85-123 (PKKTRAMRRRLNKHEESLKTKKQQRKERLYPLRKYAVKA) is disordered. Basic residues predominate over residues 86–96 (KKTRAMRRRLN).

This sequence belongs to the universal ribosomal protein uL29 family. As to quaternary structure, component of the large ribosomal subunit.

It is found in the cytoplasm. Functionally, component of the large ribosomal subunit. The ribosome is a large ribonucleoprotein complex responsible for the synthesis of proteins in the cell. The protein is Large ribosomal subunit protein uL29 (RPL35) of Oryctolagus cuniculus (Rabbit).